A 489-amino-acid polypeptide reads, in one-letter code: Glutamyl-tRNA(Gln) amidotransferase subunit A (489 aa).

Active-site charge relay system residues include K78 and S153. Catalysis depends on S177, which acts as the Acyl-ester intermediate.

Belongs to the amidase family. GatA subfamily. As to quaternary structure, heterotrimer of A, B and C subunits.

The enzyme catalyses L-glutamyl-tRNA(Gln) + L-glutamine + ATP + H2O = L-glutaminyl-tRNA(Gln) + L-glutamate + ADP + phosphate + H(+). Allows the formation of correctly charged Gln-tRNA(Gln) through the transamidation of misacylated Glu-tRNA(Gln) in organisms which lack glutaminyl-tRNA synthetase. The reaction takes place in the presence of glutamine and ATP through an activated gamma-phospho-Glu-tRNA(Gln). The protein is Glutamyl-tRNA(Gln) amidotransferase subunit A of Enterococcus faecalis (strain ATCC 700802 / V583).